Here is a 419-residue protein sequence, read N- to C-terminus: Gamma-glutamyl phosphate reductase (419 aa).

Belongs to the gamma-glutamyl phosphate reductase family.

Its subcellular location is the cytoplasm. The enzyme catalyses L-glutamate 5-semialdehyde + phosphate + NADP(+) = L-glutamyl 5-phosphate + NADPH + H(+). The protein operates within amino-acid biosynthesis; L-proline biosynthesis; L-glutamate 5-semialdehyde from L-glutamate: step 2/2. Its function is as follows. Catalyzes the NADPH-dependent reduction of L-glutamate 5-phosphate into L-glutamate 5-semialdehyde and phosphate. The product spontaneously undergoes cyclization to form 1-pyrroline-5-carboxylate. This chain is Gamma-glutamyl phosphate reductase, found in Azoarcus sp. (strain BH72).